Reading from the N-terminus, the 160-residue chain is Ribosomal RNA large subunit methyltransferase H (160 aa).

S-adenosyl-L-methionine contacts are provided by residues L76, G108, and 127 to 132 (LGKMTW).

This sequence belongs to the RNA methyltransferase RlmH family. Homodimer.

Its subcellular location is the cytoplasm. It catalyses the reaction pseudouridine(1915) in 23S rRNA + S-adenosyl-L-methionine = N(3)-methylpseudouridine(1915) in 23S rRNA + S-adenosyl-L-homocysteine + H(+). Its function is as follows. Specifically methylates the pseudouridine at position 1915 (m3Psi1915) in 23S rRNA. The sequence is that of Ribosomal RNA large subunit methyltransferase H from Rhizobium meliloti (strain 1021) (Ensifer meliloti).